A 477-amino-acid polypeptide reads, in one-letter code: Pyruvate kinase (477 aa).

R34 is a substrate binding site. 3 residues coordinate K(+): N36, D64, and T65. Position 36 to 39 (36 to 39 (NTAH)) interacts with ATP. Residues R71 and K150 each contribute to the ATP site. E216 provides a ligand contact to Mg(2+). Substrate-binding residues include G239, D240, and T272. D240 lines the Mg(2+) pocket.

The protein belongs to the pyruvate kinase family. In terms of assembly, homotetramer. Mg(2+) serves as cofactor. Requires K(+) as cofactor.

It carries out the reaction pyruvate + ATP = phosphoenolpyruvate + ADP + H(+). It functions in the pathway carbohydrate degradation; glycolysis; pyruvate from D-glyceraldehyde 3-phosphate: step 5/5. In Borreliella burgdorferi (strain ATCC 35210 / DSM 4680 / CIP 102532 / B31) (Borrelia burgdorferi), this protein is Pyruvate kinase (pyk).